A 466-amino-acid polypeptide reads, in one-letter code: mRNA-capping enzyme subunit alpha (466 aa).

The active-site N6-GMP-lysine intermediate is K67. Positions 408–466 (REQGLKNAQKQFNHQASARSSLSQQHSTEPEQSQDQPKYVDDDDDNWSDDEPDTKRQKI) are disordered. Residues 413-443 (KNAQKQFNHQASARSSLSQQHSTEPEQSQDQ) show a composition bias toward polar residues. The segment covering 448 to 459 (DDDDDNWSDDEP) has biased composition (acidic residues).

The protein belongs to the eukaryotic GTase family. As to quaternary structure, heterodimer. The mRNA-capping enzyme is composed of two separate chains alpha and beta, respectively a mRNA guanylyltransferase and an mRNA 5'-triphosphate monophosphatase.

It localises to the nucleus. It catalyses the reaction a 5'-end diphospho-ribonucleoside in mRNA + GTP + H(+) = a 5'-end (5'-triphosphoguanosine)-ribonucleoside in mRNA + diphosphate. Functionally, second step of mRNA capping. Transfer of the GMP moiety of GTP to the 5'-end of RNA via an enzyme-GMP covalent reaction intermediate. The protein is mRNA-capping enzyme subunit alpha (CEG1) of Kluyveromyces lactis (strain ATCC 8585 / CBS 2359 / DSM 70799 / NBRC 1267 / NRRL Y-1140 / WM37) (Yeast).